The chain runs to 272 residues: Undecaprenyl-diphosphatase (272 aa).

A run of 8 helical transmembrane segments spans residues 1–21 (MSYL…FLPI), 38–58 (PGAT…VVFF), 84–104 (VRMG…GYLF), 112–132 (FRSL…LGLA), 145–165 (MTYG…VPGV), 183–203 (PVAA…SGLY), 219–239 (QTAV…AGLM), and 250–270 (FVVY…TGAI).

The protein belongs to the UppP family.

The protein resides in the cell membrane. The catalysed reaction is di-trans,octa-cis-undecaprenyl diphosphate + H2O = di-trans,octa-cis-undecaprenyl phosphate + phosphate + H(+). In terms of biological role, catalyzes the dephosphorylation of undecaprenyl diphosphate (UPP). Confers resistance to bacitracin. The chain is Undecaprenyl-diphosphatase from Clavibacter michiganensis subsp. michiganensis (strain NCPPB 382).